We begin with the raw amino-acid sequence, 429 residues long: Actin-like protein 6A (429 aa).

N-acetylserine is present on Ser-2. A Glycyl lysine isopeptide (Lys-Gly) (interchain with G-Cter in SUMO2) cross-link involves residue Lys-62. Phosphoserine occurs at positions 86 and 233.

The protein belongs to the actin family. Component of numerous complexes with chromatin remodeling and histone acetyltransferase activity. Component of the NuA4 histone acetyltransferase complex which contains the catalytic subunit KAT5/TIP60 and the subunits EP400, TRRAP/PAF400, BRD8/SMAP, EPC1, DMAP1/DNMAP1, RUVBL1/TIP49, RUVBL2, ING3, actin, ACTL6A/BAF53A, MORF4L1/MRG15, MORF4L2/MRGX, MRGBP, YEATS4/GAS41, VPS72/YL1 and MEAF6. The NuA4 complex interacts with MYC and the adenovirus E1A protein. Component of a NuA4-related complex which contains EP400, TRRAP/PAF400, SRCAP, BRD8/SMAP, EPC1, DMAP1/DNMAP1, RUVBL1/TIP49, RUVBL2, actin, ACTL6A/BAF53A, VPS72 and YEATS4/GAS41. Component of the multiprotein chromatin-remodeling complexes SWI/SNF: SWI/SNF-A (BAF), SWI/SNF-B (PBAF) and related complexes. The canonical complex contains a catalytic subunit (either SMARCA4/BRG1/BAF190A or SMARCA2/BRM/BAF190B) and at least SMARCE1, ACTL6A/BAF53, SMARCC1/BAF155, SMARCC2/BAF170, and SMARCB1/SNF5/BAF47. Other subunits specific to each of the complexes may also be present permitting several possible combinations developmentally and tissue specific. Component of the BAF complex, which includes at least actin (ACTB), ARID1A/BAF250A, ARID1B/BAF250B, SMARCA2/BRM, SMARCA4/BRG1/BAF190A, ACTL6A/BAF53, ACTL6B/BAF53B, SMARCE1/BAF57, SMARCC1/BAF155, SMARCC2/BAF170, SMARCB1/SNF5/INI1, and one or more SMARCD1/BAF60A, SMARCD2/BAF60B, or SMARCD3/BAF60C. In muscle cells, the BAF complex also contains DPF3. Component of the BAF53 complex, at least composed of ACTL6A/BAF53A, RUVBL1/TIP49, SMARCA2/BRM/BAF190B and TRRAP/PAF400, and which may also include a HAT activity related to, but distinct from, that of KAT5. Component of neural progenitors-specific chromatin remodeling complex (npBAF complex) composed of at least, ARID1A/BAF250A or ARID1B/BAF250B, SMARCD1/BAF60A, SMARCD3/BAF60C, SMARCA2/BRM/BAF190B, SMARCA4/BRG1/BAF190A, SMARCB1/BAF47, SMARCC1/BAF155, SMARCE1/BAF57, SMARCC2/BAF170, PHF10/BAF45A, ACTL6A/BAF53A and actin. Component of SWI/SNF (GBAF) subcomplex, which includes at least BICRA or BICRAL (mutually exclusive), BRD9, SS18, SMARCA2/BRM, SMARCA4/BRG1/BAF190A, ACTL6A/BAF53, SMARCC1/BAF155, and SMARCD1/BAF60A. May be a component of the SWI/SNF-B (PBAF) chromatin remodeling complex, at least composed of SMARCA4/BRG1, SMARCB1/BAF47/SNF5, ACTL6A/BAF53A or ACTL6B/BAF53B, SMARCE1/BAF57, SMARCD1/BAF60A, SMARCD2/BAF60B, perhaps SMARCD3/BAF60C, SMARCC1/BAF155, SMARCC2/BAF170, PBRM1/BAF180, ARID2/BAF200 and actin. Interacts with SMARCA4/BRG1/BAF190A. Interacts with PHF10/BAF45A. Component of the chromatin remodeling INO80 complex; specifically part of a complex module associated with the DBINO domain of INO80. Interacts with DPF2. As to expression, widely expressed. Expressed selectively in neural stem and progenitor cells (at protein level).

It localises to the nucleus. Involved in transcriptional activation and repression of select genes by chromatin remodeling (alteration of DNA-nucleosome topology). Component of SWI/SNF chromatin remodeling complexes that carry out key enzymatic activities, changing chromatin structure by altering DNA-histone contacts within a nucleosome in an ATP-dependent manner. Required for maximal ATPase activity of SMARCA4/BRG1/BAF190A and for association of the SMARCA4/BRG1/BAF190A containing remodeling complex BAF with chromatin/nuclear matrix. Belongs to the neural progenitors-specific chromatin remodeling complex (npBAF complex) and is required for the proliferation of neural progenitors. During neural development a switch from a stem/progenitor to a postmitotic chromatin remodeling mechanism occurs as neurons exit the cell cycle and become committed to their adult state. The transition from proliferating neural stem/progenitor cells to postmitotic neurons requires a switch in subunit composition of the npBAF and nBAF complexes. As neural progenitors exit mitosis and differentiate into neurons, npBAF complexes which contain ACTL6A/BAF53A and PHF10/BAF45A, are exchanged for homologous alternative ACTL6B/BAF53B and DPF1/BAF45B or DPF3/BAF45C subunits in neuron-specific complexes (nBAF). The npBAF complex is essential for the self-renewal/proliferative capacity of the multipotent neural stem cells. The nBAF complex along with CREST plays a role regulating the activity of genes essential for dendrite growth. Component of the NuA4 histone acetyltransferase (HAT) complex which is involved in transcriptional activation of select genes principally by acetylation of nucleosomal histones H4 and H2A. This modification may both alter nucleosome - DNA interactions and promote interaction of the modified histones with other proteins which positively regulate transcription. This complex may be required for the activation of transcriptional programs associated with oncogene and proto-oncogene mediated growth induction, tumor suppressor mediated growth arrest and replicative senescence, apoptosis, and DNA repair. NuA4 may also play a direct role in DNA repair when recruited to sites of DNA damage. Putative core component of the chromatin remodeling INO80 complex which is involved in transcriptional regulation, DNA replication and probably DNA repair. This chain is Actin-like protein 6A (Actl6a), found in Mus musculus (Mouse).